We begin with the raw amino-acid sequence, 152 residues long: UPF0336 protein Tfu_2666 (152 aa).

The 110-residue stretch at 7–116 (YLGRAYELPE…TTITDIKSLA (110 aa)) folds into the MaoC-like domain.

It belongs to the UPF0336 family.

The chain is UPF0336 protein Tfu_2666 from Thermobifida fusca (strain YX).